Here is a 297-residue protein sequence, read N- to C-terminus: MKRPDYRTLQALDAVIRERGFERAAQKLCITQSAVSQRIKQLENMFGQPLLVRTVPPRPTEQGQKLLALLRQVELLEDEWLGDEQTGSTPLLLSLAVNADSLATWLLPALAPVLADSPIRLNLQVEDETRTQERLRRGEVVGAVSIQHQALPSCLVDKLGALDYLFVGSKPFAERYFPNGVTRSALLKAPAVAFDHLDDMHQAFLQQNFDLPPGSVPCHIVNSSEAFVQLARQGTTCCMIPHLQIEKELESGELIDLTPGLFQRRMLYWHRFAPESRMMRNVTDALLEYGHKVLRQD.

The 57-residue stretch at 4-60 folds into the HTH lysR-type domain; the sequence is PDYRTLQALDAVIRERGFERAAQKLCITQSAVSQRIKQLENMFGQPLLVRTVPPRPT. The H-T-H motif DNA-binding region spans 21–40; that stretch reads FERAAQKLCITQSAVSQRIK.

This sequence belongs to the LysR transcriptional regulatory family. Homodimer.

Its function is as follows. Controls the transcription of genes involved in arginine and lysine metabolism. This Citrobacter koseri (strain ATCC BAA-895 / CDC 4225-83 / SGSC4696) protein is HTH-type transcriptional regulator ArgP.